A 526-amino-acid polypeptide reads, in one-letter code: Lysine--tRNA ligase (526 aa).

Positions 30–38 (PSGYVHIGN) match the 'HIGH' region motif. Zn(2+) is bound by residues Asp95, Cys99, His100, His106, Cys177, and Cys199. The 'KMSKS' region signature appears at 280-284 (KMSGS).

The protein belongs to the class-I aminoacyl-tRNA synthetase family. Zn(2+) serves as cofactor.

It is found in the cytoplasm. The catalysed reaction is tRNA(Lys) + L-lysine + ATP = L-lysyl-tRNA(Lys) + AMP + diphosphate. The protein is Lysine--tRNA ligase (lysS) of Thermococcus kodakarensis (strain ATCC BAA-918 / JCM 12380 / KOD1) (Pyrococcus kodakaraensis (strain KOD1)).